Consider the following 132-residue polypeptide: Ribosome-binding factor A (132 aa).

It belongs to the RbfA family. As to quaternary structure, monomer. Binds 30S ribosomal subunits, but not 50S ribosomal subunits or 70S ribosomes.

The protein resides in the cytoplasm. One of several proteins that assist in the late maturation steps of the functional core of the 30S ribosomal subunit. Associates with free 30S ribosomal subunits (but not with 30S subunits that are part of 70S ribosomes or polysomes). Required for efficient processing of 16S rRNA. May interact with the 5'-terminal helix region of 16S rRNA. The polypeptide is Ribosome-binding factor A (Teredinibacter turnerae (strain ATCC 39867 / T7901)).